The following is a 116-amino-acid chain: ATP synthase lipid-binding protein, mitochondrial (116 aa).

Residues 1–24 (MYCQRLALPLTRSLLASRAPLALR) constitute a mitochondrion transit peptide. A helical transmembrane segment spans residues 57–77 (VGVAGSGAGIGNVFGALVIGY). N6,N6,N6-trimethyllysine is present on lysine 84. Residues 92 to 112 (ILGFALSEAMGLFCLTMGFMI) form a helical membrane-spanning segment.

It belongs to the ATPase C chain family. F-type ATPases have 2 components, CF(1) - the catalytic core - and CF(0) - the membrane proton channel. CF(1) has five subunits: alpha(3), beta(3), gamma(1), delta(1), epsilon(1). CF(0) has three main subunits: a, b and c. Post-translationally, trimethylated by ATPSCKMT at Lys-84. Methylation may be required for proper incorporation of the C subunit into the ATP synthase complex and mitochondrial respiration.

Its subcellular location is the mitochondrion membrane. Functionally, mitochondrial membrane ATP synthase (F(1)F(0) ATP synthase or Complex V) produces ATP from ADP in the presence of a proton gradient across the membrane which is generated by electron transport complexes of the respiratory chain. F-type ATPases consist of two structural domains, F(1) - containing the extramembraneous catalytic core and F(0) - containing the membrane proton channel, linked together by a central stalk and a peripheral stalk. During catalysis, ATP synthesis in the catalytic domain of F(1) is coupled via a rotary mechanism of the central stalk subunits to proton translocation. Part of the complex F(0) domain. A homomeric c-ring of probably 10 subunits is part of the complex rotary element. The chain is ATP synthase lipid-binding protein, mitochondrial from Caenorhabditis briggsae.